The primary structure comprises 268 residues: Purine nucleoside phosphorylase (268 aa).

Phosphate-binding positions include S36, H68, 88–90 (RIH), and A120. E189 is a binding site for a purine D-ribonucleoside. Phosphate is bound at residue S208. Residue N231 coordinates a purine D-ribonucleoside.

Belongs to the PNP/MTAP phosphorylase family. Homotrimer.

It carries out the reaction a purine 2'-deoxy-D-ribonucleoside + phosphate = a purine nucleobase + 2-deoxy-alpha-D-ribose 1-phosphate. It functions in the pathway purine metabolism; purine nucleoside salvage. In terms of biological role, the purine nucleoside phosphorylases catalyze the phosphorolytic breakdown of the N-glycosidic bond in the beta-(deoxy)ribonucleoside molecules, with the formation of the corresponding free purine bases and pentose-1-phosphate. Cleaves guanosine, inosine, 2'-deoxyguanosine and 2'-deoxyinosine. The protein is Purine nucleoside phosphorylase (punA) of Mycobacterium leprae (strain TN).